Reading from the N-terminus, the 627-residue chain is (R)-linalool synthase, chloroplastic (627 aa).

The transit peptide at 1 to 21 (MAFVSIAPLASRCCVHKSFVS) directs the protein to the chloroplast. Residues Asp-378, Asp-382, and Glu-530 each coordinate Mg(2+). Positions 378–382 (DDIYD) match the DDXXD motif motif.

This sequence belongs to the terpene synthase family. Tpsd subfamily. Requires Mg(2+) as cofactor. Mn(2+) serves as cofactor.

The protein resides in the plastid. Its subcellular location is the chloroplast. It catalyses the reaction (2E)-geranyl diphosphate + H2O = (R)-linalool + diphosphate. It functions in the pathway terpene metabolism; oleoresin biosynthesis. In terms of biological role, terpene synthase (TPS) involved in the biosynthesis of monoterpene natural products included in conifer oleoresin secretions and volatile emissions; these compounds contribute to biotic and abiotic stress defense against herbivores and pathogens. Catalyzes the conversion of (2E)-geranyl diphosphate (GPP) to (R)-linalool. The protein is (R)-linalool synthase, chloroplastic of Picea glauca (White spruce).